Consider the following 212-residue polypeptide: MSPENDIRLEAGRKLFAGAVNFLKSAPALEFLPAPTAPEVAFAGRSNVGKSSLINALTNRNSLARASTTPGRTQELNFFDVGEPLQMRLVDMPGYGFAKAPKDVVKRWKWLINDYLRGRAVLRRSLILIDSRHGIKDVDRDLMKMLDDAAISYRVVLTKSDKIKAVELEKTVKAITEEMRKHPAAFPEIIATSSEKGTGIAELRAAVYDAII.

Residues 36–212 (TAPEVAFAGR…LRAAVYDAII (177 aa)) form the EngB-type G domain. GTP contacts are provided by residues 44-51 (GRSNVGKS), 71-75 (GRTQE), 91-94 (DMPG), 158-161 (TKSD), and 192-194 (TSS). S51 and T73 together coordinate Mg(2+).

Belongs to the TRAFAC class TrmE-Era-EngA-EngB-Septin-like GTPase superfamily. EngB GTPase family. The cofactor is Mg(2+).

Functionally, necessary for normal cell division and for the maintenance of normal septation. The chain is GTP-binding protein EngB from Zymomonas mobilis subsp. mobilis (strain ATCC 31821 / ZM4 / CP4).